We begin with the raw amino-acid sequence, 92 residues long: UPF0297 protein TTE1249 (92 aa).

This sequence belongs to the UPF0297 family.

The sequence is that of UPF0297 protein TTE1249 from Caldanaerobacter subterraneus subsp. tengcongensis (strain DSM 15242 / JCM 11007 / NBRC 100824 / MB4) (Thermoanaerobacter tengcongensis).